We begin with the raw amino-acid sequence, 107 residues long: Small ribosomal subunit protein bS16 (107 aa).

The disordered stretch occupies residues R85–K107.

Belongs to the bacterial ribosomal protein bS16 family.

The chain is Small ribosomal subunit protein bS16 from Rhodopseudomonas palustris (strain BisB5).